A 444-amino-acid polypeptide reads, in one-letter code: Exopolygalacturonase clone GBGA483 (444 aa).

A signal peptide spans 1–23 (MVGSHKASGVLLVLLVVMATTIA). PbH1 repeat units follow at residues 220-246 (CKNITLSDIGIDAPPESLNTDGIHIGR), 247-268 (SNGVNLIGAKIKTGDDCVSIGD), 270-290 (TENLIVENVECGPGHGISIGS), 300-321 (VKGVTVRKCLIKNTDNGVRIKT), and 330-351 (ASNILFEDITMDNVSLPVLIDQ). N-linked (GlcNAc...) asparagine glycosylation is present at Asn222. Catalysis depends on Asp261, which acts as the Proton donor. A disulfide bridge connects residues Cys263 and Cys280. Residue His284 is part of the active site. Residue Asn342 is glycosylated (N-linked (GlcNAc...) asparagine). Intrachain disulfides connect Cys391-Cys397 and Cys420-Cys436.

This sequence belongs to the glycosyl hydrolase 28 family.

Its subcellular location is the secreted. The protein resides in the cell wall. The enzyme catalyses [(1-&gt;4)-alpha-D-galacturonosyl](n) + H2O = alpha-D-galacturonate + [(1-&gt;4)-alpha-D-galacturonosyl](n-1). Its function is as follows. May function in depolymerizing pectin during pollen development, germination, and tube growth. Acts as an exo-polygalacturonase. This chain is Exopolygalacturonase clone GBGA483, found in Arabidopsis thaliana (Mouse-ear cress).